A 387-amino-acid chain; its full sequence is Cyclin-J-like protein (387 aa).

The region spanning 13 to 142 is the Cyclin N-terminal domain; it reads DVHCTLREKE…LLEAFSWDLC (130 aa).

This sequence belongs to the cyclin family. Cyclin J subfamily.

The polypeptide is Cyclin-J-like protein (Ccnjl) (Mus musculus (Mouse)).